A 1285-amino-acid polypeptide reads, in one-letter code: Dermonecrotic toxin (1285 aa).

Residues Met402–Leu422 traverse the membrane as a helical segment.

It is found in the cytoplasm. The protein resides in the secreted. It localises to the host membrane. This is a dermonecrotic toxin. This osteolytic toxin, induces bone resorption. Potent mitogen. This toxin is associated with the severe progressive form of the atrophic rhinitis, a major respiratory disease in pigs. This chain is Dermonecrotic toxin (toxA), found in Pasteurella multocida.